We begin with the raw amino-acid sequence, 90 residues long: UPF0223 protein lmo1058 (90 aa).

The protein belongs to the UPF0223 family.

This is UPF0223 protein lmo1058 from Listeria monocytogenes serovar 1/2a (strain ATCC BAA-679 / EGD-e).